The following is a 1379-amino-acid chain: Hepatocyte growth factor receptor (1379 aa).

The N-terminal stretch at 1-24 is a signal peptide; sequence MKAPTVLAPGILVLLLSLVQRSHG. The Extracellular portion of the chain corresponds to 25 to 931; sequence ECKEALVKSE…VIVQPDQNFA (907 aa). Residues 27-514 form the Sema domain; the sequence is KEALVKSEMN…TGKKITKIPL (488 aa). Asparagine 45 carries N-linked (GlcNAc...) asparagine glycosylation. 4 cysteine pairs are disulfide-bonded: cysteine 95–cysteine 101, cysteine 98–cysteine 160, cysteine 133–cysteine 141, and cysteine 171–cysteine 174. Asparagine 106 is a glycosylation site (N-linked (GlcNAc...) asparagine). Asparagine 201 and asparagine 357 each carry an N-linked (GlcNAc...) asparagine glycan. Intrachain disulfides connect cysteine 297-cysteine 362 and cysteine 384-cysteine 396. 2 N-linked (GlcNAc...) asparagine glycosylation sites follow: asparagine 398 and asparagine 404. 4 disulfide bridges follow: cysteine 519–cysteine 537, cysteine 525–cysteine 560, cysteine 528–cysteine 544, and cysteine 540–cysteine 550. IPT/TIG domains follow at residues 562 to 654, 656 to 738, and 741 to 835; these read PAVY…FSYV, PVIT…FSYR, and PVVY…LTYV. The O-linked (Man) threonine glycan is linked to threonine 581. Asparagine 606 and asparagine 634 each carry an N-linked (GlcNAc...) asparagine glycan. Threonine 675 and threonine 760 each carry an O-linked (Man) threonine glycan. Asparagine 784 and asparagine 878 each carry an N-linked (GlcNAc...) asparagine glycan. Residues 932–954 form a helical membrane-spanning segment; that stretch reads GLIIGAVSISVVVLLLSGLFLWM. The Cytoplasmic portion of the chain corresponds to 955–1379; the sequence is RKRKHKDLGS…QDNIDGEGNT (425 aa). A Phosphoserine modification is found at serine 964. Threonine 975 carries the post-translational modification Phosphothreonine. Serine 988, serine 995, and serine 998 each carry phosphoserine. Tyrosine 1001 carries the phosphotyrosine modification. One can recognise a Protein kinase domain in the interval 1076–1343; the sequence is VHFNEVIGRG…RISSIFSTFI (268 aa). Residues 1082–1090 and lysine 1108 each bind ATP; that span reads IGRGHFGCV. Catalysis depends on aspartate 1202, which acts as the Proton acceptor. Residues 1210–1379 are interaction with RANBP9; that stretch reads LDEKFTVKVA…QDNIDGEGNT (170 aa). Tyrosine 1228 is subject to Phosphotyrosine. Residues tyrosine 1232 and tyrosine 1233 each carry the phosphotyrosine; by autocatalysis modification. Threonine 1287 is subject to Phosphothreonine. The interval 1318–1357 is interaction with MUC20; the sequence is WHPKAEMRPSFSELVSRISSIFSTFIGEHYVHVNATYVNV. Phosphotyrosine; by autocatalysis occurs at positions 1347 and 1354. Phosphotyrosine is present on tyrosine 1363.

The protein belongs to the protein kinase superfamily. Tyr protein kinase family. As to quaternary structure, heterodimer made of an alpha chain (50 kDa) and a beta chain (145 kDa) which are disulfide linked. Binds PLXNB1. Interacts when phosphorylated with downstream effectors including STAT3, PIK3R1, SRC, PCLG1, GRB2 and GAB1. When phosphorylated at Tyr-1354, interacts with INPPL1/SHIP2. Interacts with RANBP9 and RANBP10. Interacts with INPP5D/SHIP1. Interacts with SPSB1, SPSB2, SPSB4 and probably SPSB3. SPSB1 binding occurs in the presence and in the absence of HGF, however HGF treatment has a positive effect on this interaction. Interacts with MUC20; prevents interaction with GRB2 and suppresses hepatocyte growth factor-induced cell proliferation. Interacts with GRB10. Interacts with PTPN1 and PTPN2. Interacts with HSP90AA1 and HSP90AB1; the interaction suppresses MET kinase activity. Interacts with tensin TNS3. Interacts (when phosphorylated) with tensin TNS4 (via SH2 domain); the interaction increases MET protein stability by inhibiting MET endocytosis and subsequent lysosomal degradation. (Microbial infection) Interacts with L.monocytogenes InlB. InlB probably dimerizes upon binding to MET, which encourages subsequent dimerization of MET. In terms of processing, autophosphorylated in response to ligand binding on Tyr-1232 and Tyr-1233 in the kinase domain leading to further phosphorylation of Tyr-1347 and Tyr-1354 in the C-terminal multifunctional docking site. Dephosphorylated by PTPRJ at Tyr-1347 and Tyr-1363. Dephosphorylated by PTPN1 and PTPN2. Post-translationally, ubiquitinated. Ubiquitination by CBL regulates MET endocytosis, resulting in decreasing plasma membrane receptor abundance, and in endosomal degradation and/or recycling of internalized receptors. O-mannosylation of IPT/TIG domains by TMEM260 is required for protein maturation. O-mannosylated residues are composed of single mannose glycans that are not elongated or modified. In terms of processing, (Microbial infection) Tyrosine phosphorylation is stimulated by L.monocytogenes InlB.

It is found in the membrane. The enzyme catalyses L-tyrosyl-[protein] + ATP = O-phospho-L-tyrosyl-[protein] + ADP + H(+). With respect to regulation, in its inactive state, the C-terminal tail interacts with the catalytic domain and inhibits the kinase activity. Upon ligand binding, the C-terminal tail is displaced and becomes phosphorylated, thus increasing the kinase activity. Receptor tyrosine kinase that transduces signals from the extracellular matrix into the cytoplasm by binding to hepatocyte growth factor/HGF ligand. Regulates many physiological processes including proliferation, scattering, morphogenesis and survival. Ligand binding at the cell surface induces autophosphorylation of MET on its intracellular domain that provides docking sites for downstream signaling molecules. Following activation by ligand, interacts with the PI3-kinase subunit PIK3R1, PLCG1, SRC, GRB2, STAT3 or the adapter GAB1. Recruitment of these downstream effectors by MET leads to the activation of several signaling cascades including the RAS-ERK, PI3 kinase-AKT, or PLCgamma-PKC. The RAS-ERK activation is associated with the morphogenetic effects while PI3K/AKT coordinates prosurvival effects. During embryonic development, MET signaling plays a role in gastrulation, development and migration of neuronal precursors, angiogenesis and kidney formation. During skeletal muscle development, it is crucial for the migration of muscle progenitor cells and for the proliferation of secondary myoblasts. In adults, participates in wound healing as well as organ regeneration and tissue remodeling. Also promotes differentiation and proliferation of hematopoietic cells. May regulate cortical bone osteogenesis. In terms of biological role, (Microbial infection) Acts as a receptor for Listeria monocytogenes internalin InlB, mediating entry of the pathogen into cells. This Mus musculus (Mouse) protein is Hepatocyte growth factor receptor (Met).